The sequence spans 324 residues: Cysteine-rich repeat secretory protein 9 (324 aa).

An N-terminal signal peptide occupies residues 1–27 (MARIIITLTIPLFYFFFFSLLSHQTMS). Gnk2-homologous domains lie at 29–132 (PDHI…NVSF) and 138–248 (IVPS…TSVL). The tract at residues 251–286 (PPPSPSAPPPRSPPPKSSPPSSLPQTPSPPLVFTPP) is disordered.

This sequence belongs to the cysteine-rich repeat secretory protein family.

The protein resides in the secreted. The sequence is that of Cysteine-rich repeat secretory protein 9 (CRRSP9) from Arabidopsis thaliana (Mouse-ear cress).